Here is a 374-residue protein sequence, read N- to C-terminus: Chaperone protein DnaJ (374 aa).

Positions 5–70 (DFYEILGVGK…QKRDAYDRYG (66 aa)) constitute a J domain. Residues 29-50 (AMKHHPDRNPDSKGAEDKFKEA) form a disordered region. Positions 35 to 50 (DRNPDSKGAEDKFKEA) are enriched in basic and acidic residues. The CR-type zinc finger occupies 134–212 (GYDTTIRVPS…CSGAGKIKRN (79 aa)). Positions 147, 150, 164, 167, 186, 189, 200, and 203 each coordinate Zn(2+). CXXCXGXG motif repeat units follow at residues 147-154 (CETCDGSG), 164-171 (CTTCGGHG), 186-193 (CPKCHGSG), and 200-207 (CGTCSGAG).

The protein belongs to the DnaJ family. As to quaternary structure, homodimer. Requires Zn(2+) as cofactor.

The protein localises to the cytoplasm. Participates actively in the response to hyperosmotic and heat shock by preventing the aggregation of stress-denatured proteins and by disaggregating proteins, also in an autonomous, DnaK-independent fashion. Unfolded proteins bind initially to DnaJ; upon interaction with the DnaJ-bound protein, DnaK hydrolyzes its bound ATP, resulting in the formation of a stable complex. GrpE releases ADP from DnaK; ATP binding to DnaK triggers the release of the substrate protein, thus completing the reaction cycle. Several rounds of ATP-dependent interactions between DnaJ, DnaK and GrpE are required for fully efficient folding. Also involved, together with DnaK and GrpE, in the DNA replication of plasmids through activation of initiation proteins. The chain is Chaperone protein DnaJ from Janthinobacterium sp. (strain Marseille) (Minibacterium massiliensis).